The primary structure comprises 947 residues: Zinc finger CCCH domain-containing protein 18 (947 aa).

At Met1 the chain carries N-acetylmethionine. Disordered stretches follow at residues 1 to 218 (MDVA…PRPT), 275 to 295 (GGPV…TESA), and 387 to 921 (YTEA…TLSR). 9 positions are modified to phosphoserine: Ser6, Ser32, Ser44, Ser57, Ser63, Ser70, Ser74, Ser79, and Ser91. The span at 73-85 (KSQDQDSEAHELS) shows a compositional bias: basic and acidic residues. Residues 94–104 (EEGDDAEEDGT) are compositionally biased toward acidic residues. Thr104 carries the post-translational modification Phosphothreonine. A phosphoserine mark is found at Ser105 and Ser113. A compositionally biased stretch (basic and acidic residues) spans 105-119 (SDLRDEASSVTRELD). Composition is skewed to acidic residues over residues 120–131 (EHELDYDEEVPE) and 138–153 (QEEE…EEEK). The segment covering 160–185 (EEGKPDVQSVGEKEPTEAAKEKKKED) has biased composition (basic and acidic residues). Ser168 is subject to Phosphoserine. Positions 186 to 202 (DDGEIDDGEIDDDDLEE) are enriched in acidic residues. The span at 203 to 212 (GEVKDPSDRK) shows a compositional bias: basic and acidic residues. The C3H1-type zinc finger occupies 214 to 240 (RPRPTCRFFMKGNCTWGMNCRFIHPGV). Positions 391–479 (EPYHNYRDRE…DRDKDKEKPK (89 aa)) are enriched in basic and acidic residues. Ser482 bears the Phosphoserine mark. A Glycyl lysine isopeptide (Lys-Gly) (interchain with G-Cter in SUMO2) cross-link involves residue Lys505. A compositionally biased stretch (basic and acidic residues) spans 505 to 515 (KRADEWKDPWR). 3 positions are modified to phosphoserine: Ser527, Ser529, and Ser531. Low complexity predominate over residues 540 to 601 (SASSASASNS…SRSRSFSSSP (62 aa)). The span at 602-611 (SPSPTPSPHR) shows a compositional bias: pro residues. Residues Lys617 and Lys656 each participate in a glycyl lysine isopeptide (Lys-Gly) (interchain with G-Cter in SUMO2) cross-link. Positions 656–665 (KPGDLREARR) are enriched in basic and acidic residues. Composition is skewed to low complexity over residues 687 to 720 (GSSY…SVHS) and 731 to 745 (ASPV…PTPA). Basic and acidic residues predominate over residues 755–769 (KKEDGVREEKRKRDP). Residues 773–804 (PPKSSKAPAGGKASQQAAAPQQAAPGQPQQGS) are compositionally biased toward low complexity. N6-acetyllysine is present on Lys809. A Glycyl lysine isopeptide (Lys-Gly) (interchain with G-Cter in SUMO2) cross-link involves residue Lys812. The segment covering 819 to 836 (AAEKGSRKRYEPSDKDRQ) has biased composition (basic and acidic residues). 5 positions are modified to phosphoserine: Ser837, Ser846, Ser862, Ser887, and Ser890. Residues 887–918 (SPQSKSSSKVTSVPGKATDTATAGTKSGKAST) are compositionally biased toward low complexity. A Glycyl lysine isopeptide (Lys-Gly) (interchain with G-Cter in SUMO2) cross-link involves residue Lys902. Positions 915–944 (KASTLSRREELLKQLKAVEDAIARKRAKIP) form a coiled coil.

In terms of assembly, interacts with ZFC3H1 in a RNase-insensitive manner.

The protein resides in the nucleus. This is Zinc finger CCCH domain-containing protein 18 (Zc3h18) from Rattus norvegicus (Rat).